The sequence spans 312 residues: GATA transcription factor 6 (312 aa).

Disordered regions lie at residues 1–33 (MESVELTLKNSNMKDKTLTGGAQNGDDFSVDDL), 56–77 (QRKRGVSDENTLHRSNDFSTAD), and 136–186 (KSQH…PLWL). A compositionally biased stretch (basic and acidic residues) spans 56–71 (QRKRGVSDENTLHRSN). The span at 142 to 151 (VKTRPKRART) shows a compositional bias: basic residues. The Nuclear localization signal motif lies at 143-150 (KTRPKRAR). Residues 157–186 (SHGSQSLTDSSSSSTTSSSSSPRPSSPLWL) are compositionally biased toward low complexity. A GATA-type zinc finger spans residues 217–271 (QTQTRQCGHCGVQKTPQWRAGPLGAKTLCNACGVRYKSGRLLPEYRPACSPTFSS).

It belongs to the type IV zinc-finger family. Class A subfamily.

Its subcellular location is the nucleus. In terms of biological role, transcriptional activator that specifically binds 5'-GATA-3' or 5'-GAT-3' motifs within gene promoters. May be involved in the regulation of some light-responsive genes. The chain is GATA transcription factor 6 (GATA6) from Arabidopsis thaliana (Mouse-ear cress).